The following is a 336-amino-acid chain: CMP-sialic acid transporter (336 aa).

At 1-9 (MAPARENVS) the chain is on the cytoplasmic side. A helical membrane pass occupies residues 10-30 (LFFKLYCLTVMTLVAAAYTVA). Over 31 to 45 (LRYTRTTAEELYFST) the chain is Lumenal. The chain crosses the membrane as a helical span at residues 46-64 (TAVCITEVIKLLISVGLLA). Lys-55 provides a ligand contact to CMP-N-acetyl-beta-neuraminate. The Cytoplasmic segment spans residues 65 to 87 (KETGSLGRFKASLSENVLGSPKE). A helical membrane pass occupies residues 88–108 (LAKLSVPSLVYAVQNNMAFLA). Residue 101-102 (QN) participates in CMP-N-acetyl-beta-neuraminate binding. Topologically, residues 109–114 (LSNLDA) are lumenal. A helical transmembrane segment spans residues 115–135 (AVYQVTYQLKIPCTALCTVLM). 117 to 124 (YQVTYQLK) provides a ligand contact to CMP-N-acetyl-beta-neuraminate. Residues 136-141 (LNRTLS) lie on the Cytoplasmic side of the membrane. Residues 142-160 (KLQWISVFMLCGGVTLVQW) traverse the membrane as a helical segment. Topologically, residues 161 to 175 (KPAQATKVVVAQNPL) are lumenal. A helical membrane pass occupies residues 176 to 196 (LGFGAIAIAVLCSGFAGVYFE). CMP-N-acetyl-beta-neuraminate is bound at residue Ser-188. The Cytoplasmic segment spans residues 197–209 (KVLKSSDTSLWVR). A CMP-N-acetyl-beta-neuraminate-binding site is contributed by 210–214 (NIQMY). The chain crosses the membrane as a helical span at residues 210–228 (NIQMYLSGIVVTLAGTYLS). The Lumenal portion of the chain corresponds to 229–243 (DGAEIQEKGFFYGYT). The chain crosses the membrane as a helical span at residues 244–262 (YYVWFVIFLASVGGLYTSV). The Cytoplasmic segment spans residues 263–269 (VVKYTDN). Residues 270–288 (IMKGFSAAAAIVLSTIASV) traverse the membrane as a helical segment. Lys-272 is a binding site for CMP-N-acetyl-beta-neuraminate. At 289–296 (LLFGLQIT) the chain is on the lumenal side. Residues 297–315 (LSFALGALLVCVSIYLYGL) traverse the membrane as a helical segment. The Cytoplasmic portion of the chain corresponds to 316–336 (PRQDTTSIQQEATSKERIIGV). Residues 316 to 336 (PRQDTTSIQQEATSKERIIGV) are disordered.

Belongs to the nucleotide-sugar transporter family. SLC35A subfamily. In terms of assembly, monomer. In terms of tissue distribution, ubiquitous. Found in all the tissues examined including skeletal muscle, brain, heart, liver, kidney and spleen.

It localises to the golgi apparatus membrane. The catalysed reaction is CMP-N-acetyl-beta-neuraminate(in) + CMP(out) = CMP-N-acetyl-beta-neuraminate(out) + CMP(in). It catalyses the reaction CMP-N-acetyl-beta-neuraminate(in) + AMP(out) = CMP-N-acetyl-beta-neuraminate(out) + AMP(in). The enzyme catalyses CDP-L-ribitol(in) + CDP(out) = CDP-L-ribitol(out) + CDP(in). It carries out the reaction UMP(out) + CMP-N-acetyl-beta-neuraminate(in) = UMP(in) + CMP-N-acetyl-beta-neuraminate(out). Its function is as follows. Transports CMP-sialic acid from the cytosol into the Golgi apparatus, functioning as an antiporter that exchanges CMP-sialic acid for CMP. Binds both CMP-sialic acid and free CMP, but has higher affinity for free CMP. Also able to exchange CMP-sialic acid for AMP and UMP. Also mediates the transport of CDP-ribitol. The protein is CMP-sialic acid transporter of Mus musculus (Mouse).